The chain runs to 375 residues: 5-amino-6-(D-ribitylamino)uracil--L-tyrosine 4-hydroxyphenyl transferase 1 (375 aa).

The 235-residue stretch at 50 to 284 (VTYVVNRNIN…AVSRILFHGH (235 aa)) folds into the Radical SAM core domain. [4Fe-4S] cluster is bound by residues Cys-64, Cys-68, and Cys-71.

The protein belongs to the radical SAM superfamily. CofH family. In terms of assembly, consists of two subunits, CofG and CofH. [4Fe-4S] cluster serves as cofactor.

It catalyses the reaction 5-amino-6-(D-ribitylamino)uracil + L-tyrosine + S-adenosyl-L-methionine = 5-amino-5-(4-hydroxybenzyl)-6-(D-ribitylimino)-5,6-dihydrouracil + 2-iminoacetate + 5'-deoxyadenosine + L-methionine + H(+). The protein operates within cofactor biosynthesis; coenzyme F0 biosynthesis. Its function is as follows. Catalyzes the radical-mediated synthesis of 5-amino-5-(4-hydroxybenzyl)-6-(D-ribitylimino)-5,6-dihydrouracil from 5-amino-6-(D-ribitylamino)uracil and L-tyrosine. This is 5-amino-6-(D-ribitylamino)uracil--L-tyrosine 4-hydroxyphenyl transferase 1 from Methanosarcina acetivorans (strain ATCC 35395 / DSM 2834 / JCM 12185 / C2A).